The following is a 158-amino-acid chain: SsrA-binding protein (158 aa).

Belongs to the SmpB family.

The protein resides in the cytoplasm. In terms of biological role, required for rescue of stalled ribosomes mediated by trans-translation. Binds to transfer-messenger RNA (tmRNA), required for stable association of tmRNA with ribosomes. tmRNA and SmpB together mimic tRNA shape, replacing the anticodon stem-loop with SmpB. tmRNA is encoded by the ssrA gene; the 2 termini fold to resemble tRNA(Ala) and it encodes a 'tag peptide', a short internal open reading frame. During trans-translation Ala-aminoacylated tmRNA acts like a tRNA, entering the A-site of stalled ribosomes, displacing the stalled mRNA. The ribosome then switches to translate the ORF on the tmRNA; the nascent peptide is terminated with the 'tag peptide' encoded by the tmRNA and targeted for degradation. The ribosome is freed to recommence translation, which seems to be the essential function of trans-translation. This is SsrA-binding protein from Roseiflexus sp. (strain RS-1).